We begin with the raw amino-acid sequence, 261 residues long: X-box-binding protein 1 (261 aa).

The Cytoplasmic segment spans residues 1–185 (MVVVAAAPNP…VQAQLSPLQN (185 aa)). The interval 44 to 93 (RGASPEAASGGLPQARKRQRLTHLSPEEKALRRKLKNRVAAQTARDRKKA) is disordered. Phosphoserine is present on residues Ser47 and Ser68. The 64-residue stretch at 70 to 133 (EEKALRRKLK…HGLVVENQEL (64 aa)) folds into the bZIP domain. A basic motif region spans residues 72 to 94 (KALRRKLKNRVAAQTARDRKKAR). The segment at 75 to 92 (RRKLKNRVAAQTARDRKK) is nuclear localization signal (NLS); in isoforms 1 and isoform 2. The segment at 98 to 133 (LEQQVVDLEEENQKLLLENQLLREKTHGLVVENQEL) is leucine-zipper. Residues 186-203 (ISPWILAVLTLQIQSLIS) form a helical; Signal-anchor for type II membrane protein membrane-spanning segment. Residues 204–261 (CWAFWTTWTQSCSSNALPQSLPAWRSSQRSTQKDPVPYQPPFLCQWGRHQPSWKPLMN) are Lumenal-facing. Residues 235–261 (QKDPVPYQPPFLCQWGRHQPSWKPLMN) are necessary for the translational pausing of its own mRNA.

Belongs to the bZIP family. As to quaternary structure, isoform 2 interacts with SIRT1. Isoform 2 interacts with PIK3R1 and PIK3R2; the interactions are direct and induce translocation of XBP1 isoform 2 into the nucleus and the unfolded protein response (UPR) XBP1-dependent target genes activation in a ER stress- and/or insulin-dependent but PI3K-independent manner. Isoform 2 interacts with FOXO1; the interaction is direct and leads to FOXO1 ubiquitination and degradation via the proteasome pathway in hepatocytes. Isoform 1 interacts with HM13. Isoform 1 interacts with RNF139; the interaction induces ubiquitination and degradation of isoform 1. Isoform 1 interacts (via luminal domain) with DERL1; the interaction obviates the need for ectodomain shedding prior HM13/SPP-mediated XBP1 isoform 1 cleavage. Isoform 1 interacts with isoform 2; the interaction sequesters isoform 2 from the nucleus and enhances isoform 2 degradation in the cytoplasm. Isoform 1 interacts with HDAC3 and AKT1; the interactions occur in endothelial cell (EC) under disturbed flow. Isoform 1 interacts with the oncoprotein FOS. Isoform 2 interacts with ATF6; the interaction occurs in a ER stress-dependent manner and is required for DNA binding to the unfolded protein response element (UPRE). Isoform 2 interacts with PIK3R1; the interaction is direct and induces translocation of XBP1 isoform 2 into the nucleus and the unfolded protein response (UPR) XBP1-dependent target genes activation in a ER stress- and/or insulin-dependent but PI3K-independent manner. Acetylated by EP300; acetylation positively regulates the transcriptional activity of XBP1 isoform 2. Isoform 2 is deacetylated by SIRT1; deacetylation negatively regulates the transcriptional activity of XBP1 isoform 2. In terms of processing, ubiquitinated, leading to proteasome-mediated degradation in response to ER stress. Post-translationally, X-box-binding protein 1, cytoplasmic form and luminal form are produced by intramembrane proteolytic cleavage of ER membrane-anchored isoform 1 triggered by HM13/SPP in a DERL1-RNF139-dependent and VCP/p97-independent manner. X-box-binding protein 1, luminal form is ubiquitinated leading to proteasomal degradation. In terms of tissue distribution, expressed in plasma cells in rheumatoid synovium. Over-expressed in primary breast cancer and metastatic breast cancer cells. Isoform 1 and isoform 2 are expressed at higher level in proliferating as compared to confluent quiescent endothelial cells.

The protein localises to the endoplasmic reticulum. The protein resides in the nucleus. Its subcellular location is the cytoplasm. It localises to the endoplasmic reticulum membrane. It is found in the membrane. Its function is as follows. Functions as a transcription factor during endoplasmic reticulum (ER) stress by regulating the unfolded protein response (UPR). Required for cardiac myogenesis and hepatogenesis during embryonic development, and the development of secretory tissues such as exocrine pancreas and salivary gland. Involved in terminal differentiation of B lymphocytes to plasma cells and production of immunoglobulins. Modulates the cellular response to ER stress in a PIK3R-dependent manner. Binds to the cis-acting X box present in the promoter regions of major histocompatibility complex class II genes. Involved in VEGF-induced endothelial cell (EC) proliferation and retinal blood vessel formation during embryonic development but also for angiogenesis in adult tissues under ischemic conditions. Also functions as a major regulator of the UPR in obesity-induced insulin resistance and type 2 diabetes for the management of obesity and diabetes prevention. Plays a role in the unconventional cytoplasmic splicing processing of its own mRNA triggered by the endoplasmic reticulum (ER) transmembrane endoribonuclease ERN1: upon ER stress, the emerging XBP1 polypeptide chain, as part of a mRNA-ribosome-nascent chain (R-RNC) complex, cotranslationally recruits its own unprocessed mRNA through transient docking to the ER membrane and translational pausing, therefore facilitating efficient IRE1-mediated XBP1 mRNA isoform 2 production. In endothelial cells (EC), associated with KDR, promotes IRE1-mediated XBP1 mRNA isoform 2 productions in a vascular endothelial growth factor (VEGF)-dependent manner, leading to EC proliferation and angiogenesis. Functions as a negative feed-back regulator of the potent transcription factor XBP1 isoform 2 protein levels through proteasome-mediated degradation, thus preventing the constitutive activation of the ER stress response signaling pathway. Inhibits the transactivation activity of XBP1 isoform 2 in myeloma cells. Acts as a weak transcriptional factor. Together with HDAC3, contributes to the activation of NFE2L2-mediated HMOX1 transcription factor gene expression in a PI(3)K/mTORC2/Akt-dependent signaling pathway leading to EC survival under disturbed flow/oxidative stress. Binds to the ER stress response element (ERSE) upon ER stress. Binds to the consensus 5'-GATGACGTG[TG]N(3)[AT]T-3' sequence related to cAMP responsive element (CRE)-like sequences. Binds the Tax-responsive element (TRE) present in the long terminal repeat (LTR) of T-cell leukemia virus type 1 (HTLV-I) and to the TPA response elements (TRE). Associates preferentially to the HDAC3 gene promoter region in a static flow-dependent manner. Binds to the CDH5/VE-cadherin gene promoter region. Functionally, functions as a stress-inducible potent transcriptional activator during endoplasmic reticulum (ER) stress by inducing unfolded protein response (UPR) target genes via binding to the UPR element (UPRE). Up-regulates target genes encoding ER chaperones and ER-associated degradation (ERAD) components to enhance the capacity of productive folding and degradation mechanism, respectively, in order to maintain the homeostasis of the ER under ER stress. Plays a role in the production of immunoglobulins and interleukin-6 in the presence of stimuli required for plasma cell differentiation. Induces phospholipid biosynthesis and ER expansion. Contributes to the VEGF-induced endothelial cell (EC) growth and proliferation in a Akt/GSK-dependent and/or -independent signaling pathway, respectively, leading to beta-catenin nuclear translocation and E2F2 gene expression. Promotes umbilical vein EC apoptosis and atherosclerotisis development in a caspase-dependent signaling pathway, and contributes to VEGF-induced EC proliferation and angiogenesis in adult tissues under ischemic conditions. Involved in the regulation of endostatin-induced autophagy in EC through BECN1 transcriptional activation. Plays a role as an oncogene by promoting tumor progression: stimulates zinc finger protein SNAI1 transcription to induce epithelial-to-mesenchymal (EMT) transition, cell migration and invasion of breast cancer cells. Involved in adipocyte differentiation by regulating lipogenic gene expression during lactation. Plays a role in the survival of both dopaminergic neurons of the substantia nigra pars compacta (SNpc), by maintaining protein homeostasis and of myeloma cells. Increases insulin sensitivity in the liver as a response to a high carbohydrate diet, resulting in improved glucose tolerance. Also improves glucose homeostasis in an ER stress- and/or insulin-independent manner through both binding and proteasome-induced degradation of the transcription factor FOXO1, hence resulting in suppression of gluconeogenic genes expression and in a reduction of blood glucose levels. Controls the induction of de novo fatty acid synthesis in hepatocytes by regulating the expression of a subset of lipogenic genes in an ER stress- and UPR-independent manner. Associates preferentially to the HDAC3 gene promoter region in a disturbed flow-dependent manner. Binds to the BECN1 gene promoter region. Binds to the CDH5/VE-cadherin gene promoter region. Binds to the ER stress response element (ERSE) upon ER stress. Binds to the 5'-CCACG-3' motif in the PPARG promoter. This chain is X-box-binding protein 1, found in Homo sapiens (Human).